The primary structure comprises 401 residues: Riboflavin biosynthesis protein RibBA (401 aa).

The DHBP synthase stretch occupies residues 1–203 (MTDFQFSKVE…IQQLQEYRRK (203 aa)). Residues 30 to 31 (RE), Asp-35, 142 to 146 (RNGHT), and Glu-166 contribute to the D-ribulose 5-phosphate site. Glu-31 provides a ligand contact to Mg(2+). A Mg(2+)-binding site is contributed by His-145. The tract at residues 204–401 (HDSLVKQISV…QIKMGHMFNF (198 aa)) is GTP cyclohydrolase II. A GTP-binding site is contributed by 254–258 (RIHSE). Zn(2+)-binding residues include Cys-259, Cys-270, and Cys-272. Residues Gln-275, 297-299 (EGR), and Thr-319 contribute to the GTP site. The active-site Proton acceptor; for GTP cyclohydrolase activity is the Asp-331. The Nucleophile; for GTP cyclohydrolase activity role is filled by Arg-333. Positions 354 and 359 each coordinate GTP.

It in the N-terminal section; belongs to the DHBP synthase family. The protein in the C-terminal section; belongs to the GTP cyclohydrolase II family. Mg(2+) is required as a cofactor. Requires Mn(2+) as cofactor. Zn(2+) serves as cofactor.

The enzyme catalyses D-ribulose 5-phosphate = (2S)-2-hydroxy-3-oxobutyl phosphate + formate + H(+). It catalyses the reaction GTP + 4 H2O = 2,5-diamino-6-hydroxy-4-(5-phosphoribosylamino)-pyrimidine + formate + 2 phosphate + 3 H(+). It functions in the pathway cofactor biosynthesis; riboflavin biosynthesis; 2-hydroxy-3-oxobutyl phosphate from D-ribulose 5-phosphate: step 1/1. Its pathway is cofactor biosynthesis; riboflavin biosynthesis; 5-amino-6-(D-ribitylamino)uracil from GTP: step 1/4. Functionally, catalyzes the conversion of D-ribulose 5-phosphate to formate and 3,4-dihydroxy-2-butanone 4-phosphate. Catalyzes the conversion of GTP to 2,5-diamino-6-ribosylamino-4(3H)-pyrimidinone 5'-phosphate (DARP), formate and pyrophosphate. The protein is Riboflavin biosynthesis protein RibBA of Actinobacillus pleuropneumoniae serotype 5b (strain L20).